The primary structure comprises 98 residues: NADH-ubiquinone oxidoreductase chain 4L (98 aa).

A run of 3 helical transmembrane segments spans residues 1–21, 29–49, and 61–81; these read MSMV…GLLM, SLLC…VAIL, and IILL…LVMV.

Belongs to the complex I subunit 4L family. In terms of assembly, core subunit of respiratory chain NADH dehydrogenase (Complex I) which is composed of 45 different subunits.

Its subcellular location is the mitochondrion inner membrane. The enzyme catalyses a ubiquinone + NADH + 5 H(+)(in) = a ubiquinol + NAD(+) + 4 H(+)(out). Functionally, core subunit of the mitochondrial membrane respiratory chain NADH dehydrogenase (Complex I) which catalyzes electron transfer from NADH through the respiratory chain, using ubiquinone as an electron acceptor. Part of the enzyme membrane arm which is embedded in the lipid bilayer and involved in proton translocation. This Felis catus (Cat) protein is NADH-ubiquinone oxidoreductase chain 4L (MT-ND4L).